Reading from the N-terminus, the 217-residue chain is Ribonuclease HII (217 aa).

In terms of domain architecture, RNase H type-2 spans 17–207 (KVIYGVDEAG…CVGQSVSGAR (191 aa)). Residues D23, E24, and D116 each contribute to the a divalent metal cation site.

This sequence belongs to the RNase HII family. It depends on Mn(2+) as a cofactor. Mg(2+) is required as a cofactor.

It localises to the cytoplasm. It carries out the reaction Endonucleolytic cleavage to 5'-phosphomonoester.. Functionally, endonuclease that specifically degrades the RNA of RNA-DNA hybrids. This chain is Ribonuclease HII, found in Nitrosomonas europaea (strain ATCC 19718 / CIP 103999 / KCTC 2705 / NBRC 14298).